Reading from the N-terminus, the 358-residue chain is Metacaspase-3 (358 aa).

The important for catalytic activity stretch occupies residues 1–84 (MGFDFGCLLK…APTHVSGTFR (84 aa)). Catalysis depends on residues histidine 168 and cysteine 223.

This sequence belongs to the peptidase C14B family. Post-translationally, in epimastigotes, the unprocessed enzyme appears to be the main form. Auto-processing is dispensable for catalytic activity towards small oligopeptide substrates.

Its subcellular location is the cytoplasm. It localises to the nucleus. With respect to regulation, activated by Ca(2+). Functionally, cysteine protease that cleaves specifically after arginine or lysine residues. In epimastigotes, may play a role in cell cycle G1/S transition. The protein is Metacaspase-3 of Trypanosoma cruzi (strain CL Brener).